A 183-amino-acid polypeptide reads, in one-letter code: Macro domain-containing protein (183 aa).

Positions 1–174 (MKKVHLIQAD…IYKNILSNID (174 aa)) constitute a Macro domain.

It belongs to the MacroD-type family.

The protein is Macro domain-containing protein of Acinetobacter sp. (strain ED45-25).